Here is a 314-residue protein sequence, read N- to C-terminus: uncharacterized protein (314 aa).

The interval 1 to 70 (MAGNSQRRGA…QGRHKKTDDT (70 aa)) is disordered. A compositionally biased stretch (basic residues) spans 43–65 (QRPHHPAGKRAAKAARQAQGRHK). 3 residues coordinate S-adenosyl-L-methionine: Gly-265, Ile-285, and Leu-294.

It belongs to the class IV-like SAM-binding methyltransferase superfamily. RNA methyltransferase TrmH family.

This is an uncharacterized protein from Mycolicibacterium vanbaalenii (strain DSM 7251 / JCM 13017 / BCRC 16820 / KCTC 9966 / NRRL B-24157 / PYR-1) (Mycobacterium vanbaalenii).